The primary structure comprises 71 residues: Pre-hexon-linking protein VIII (71 aa).

The protein belongs to the adenoviridae hexon-linking protein family. Interacts with the peripentonal hexons as well as the hexons in the facets. Part of a complex composed of the core-capsid bridging protein, the endosome lysis protein VI and the hexon-linking protein VIII; these interactions bridge the virus core to the capsid. Cleaved by the viral protease during virion maturation. May cause the middle segment to be shed from the capsid.

The protein resides in the host nucleus. It is found in the virion. Its function is as follows. Structural component of the virion that acts as a cement protein on the capsid interior and which glue the peripentonal hexons and group-of-nine hexons together. This Canine adenovirus serotype 1 (strain Glaxo) (CAdV-1) protein is Pre-hexon-linking protein VIII.